The chain runs to 224 residues: Orotidine 5'-phosphate decarboxylase (224 aa).

Substrate contacts are provided by residues Asp10, Lys32, 59 to 68, Thr115, Arg175, Gln184, Gly204, and Arg205; that span reads DLKLHDIPNT. The active-site Proton donor is the Lys61.

The protein belongs to the OMP decarboxylase family. Type 1 subfamily. Homodimer.

It carries out the reaction orotidine 5'-phosphate + H(+) = UMP + CO2. It participates in pyrimidine metabolism; UMP biosynthesis via de novo pathway; UMP from orotate: step 2/2. Its function is as follows. Catalyzes the decarboxylation of orotidine 5'-monophosphate (OMP) to uridine 5'-monophosphate (UMP). The sequence is that of Orotidine 5'-phosphate decarboxylase from Sphingopyxis alaskensis (strain DSM 13593 / LMG 18877 / RB2256) (Sphingomonas alaskensis).